A 388-amino-acid chain; its full sequence is Homoserine O-acetyltransferase (388 aa).

An AB hydrolase-1 domain is found at 55–354; sequence PIVLIEHALT…PTGHDGFLIE (300 aa). The active-site Nucleophile is serine 150. Arginine 220 contributes to the substrate binding site. Active-site residues include aspartate 318 and histidine 348. Aspartate 349 is a binding site for substrate.

The protein belongs to the AB hydrolase superfamily. MetX family. As to quaternary structure, homodimer.

The protein resides in the cytoplasm. It carries out the reaction L-homoserine + acetyl-CoA = O-acetyl-L-homoserine + CoA. It functions in the pathway amino-acid biosynthesis; L-methionine biosynthesis via de novo pathway; O-acetyl-L-homoserine from L-homoserine: step 1/1. Functionally, transfers an acetyl group from acetyl-CoA to L-homoserine, forming acetyl-L-homoserine. The chain is Homoserine O-acetyltransferase from Corynebacterium urealyticum (strain ATCC 43042 / DSM 7109).